The primary structure comprises 147 residues: Large ribosomal subunit protein uL16 (147 aa).

Belongs to the universal ribosomal protein uL16 family. As to quaternary structure, part of the 50S ribosomal subunit.

In terms of biological role, binds 23S rRNA and is also seen to make contacts with the A and possibly P site tRNAs. The sequence is that of Large ribosomal subunit protein uL16 from Caldicellulosiruptor bescii (strain ATCC BAA-1888 / DSM 6725 / KCTC 15123 / Z-1320) (Anaerocellum thermophilum).